Consider the following 234-residue polypeptide: Transcriptional regulatory protein CseB (234 aa).

The Response regulatory domain occupies 6–119 (HVLFVEDDDV…VLVARIRAVL (114 aa)). The residue at position 55 (aspartate 55) is a 4-aspartylphosphate. Positions 140-234 (GGVLTFGDLE…VRGFGYKLKA (95 aa)) form a DNA-binding region, ompR/PhoB-type.

Phosphorylated by CseC.

The protein localises to the cytoplasm. Functionally, member of the two-component regulatory system CseB/CseC involved in the stability of the cell envelope. CseB activates transcription of RNA polymerase sigma-E factor, in response to changes in the cell envelope. This is Transcriptional regulatory protein CseB (cseB) from Streptomyces coelicolor (strain ATCC BAA-471 / A3(2) / M145).